A 316-amino-acid chain; its full sequence is Mitochondrial distribution and morphology protein 12 (316 aa).

One can recognise an SMP-LTD domain in the interval 1 to 312 (MSIDLEWNGL…FPNFHTLVLG (312 aa)).

This sequence belongs to the MDM12 family. As to quaternary structure, component of the ER-mitochondria encounter structure (ERMES) or MDM complex, composed of MMM1, MDM10, MDM12 and MDM34. An MMM1 homodimer associates with one molecule of MDM12 on each side in a pairwise head-to-tail manner, and the SMP-LTD domains of MMM1 and MDM12 generate a continuous hydrophobic tunnel for phospholipid trafficking.

The protein resides in the mitochondrion outer membrane. It localises to the endoplasmic reticulum membrane. Functionally, component of the ERMES/MDM complex, which serves as a molecular tether to connect the endoplasmic reticulum (ER) and mitochondria. Components of this complex are involved in the control of mitochondrial shape and protein biogenesis, and function in nonvesicular lipid trafficking between the ER and mitochondria. MDM12 is required for the interaction of the ER-resident membrane protein MMM1 and the outer mitochondrial membrane-resident beta-barrel protein MDM10. The MDM12-MMM1 subcomplex functions in the major beta-barrel assembly pathway that is responsible for biogenesis of all mitochondrial outer membrane beta-barrel proteins, and acts in a late step after the SAM complex. The MDM10-MDM12-MMM1 subcomplex further acts in the TOM40-specific pathway after the action of the MDM12-MMM1 complex. Essential for establishing and maintaining the structure of mitochondria and maintenance of mtDNA nucleoids. This chain is Mitochondrial distribution and morphology protein 12, found in Postia placenta (strain ATCC 44394 / Madison 698-R) (Brown rot fungus).